A 583-amino-acid polypeptide reads, in one-letter code: Putative glutaminase 3 (583 aa).

The segment at 1-29 (MDNKEKEDEELSDELKDQPGPSEKPRTPT) is disordered. 7 residues coordinate substrate: Ser216, Asn265, Glu311, Asn318, Tyr344, Tyr396, and Val414. ANK repeat units lie at residues 482–514 (DGQNRFMYATKLGDIAAIKRFLLMGHDIHCKDY), 515–548 (DDRTVLHVAAAEGDVVTLEYVLSKWQEDPNPCDR), and 549–581 (YDRTPLDDAKHFNHTACVKLLEEAITVYNLKGQ).

This sequence belongs to the glutaminase family.

It carries out the reaction L-glutamine + H2O = L-glutamate + NH4(+). This Caenorhabditis elegans protein is Putative glutaminase 3 (glna-3).